Reading from the N-terminus, the 98-residue chain is MSMVYFNIFLAFIVSLVGLLMYRSHLMSSLLCLEGMMLSLFVMMSVTILNNHFTLASMAPIILLVFAACEAALGLSLLVMVSNTYGTDYVQNLNLLQC.

3 helical membrane passes run 1–21 (MSMV…GLLM), 29–49 (SLLC…VTIL), and 61–81 (IILL…LVMV).

It belongs to the complex I subunit 4L family. Core subunit of respiratory chain NADH dehydrogenase (Complex I) which is composed of 45 different subunits.

The protein localises to the mitochondrion inner membrane. The enzyme catalyses a ubiquinone + NADH + 5 H(+)(in) = a ubiquinol + NAD(+) + 4 H(+)(out). Core subunit of the mitochondrial membrane respiratory chain NADH dehydrogenase (Complex I) which catalyzes electron transfer from NADH through the respiratory chain, using ubiquinone as an electron acceptor. Part of the enzyme membrane arm which is embedded in the lipid bilayer and involved in proton translocation. The sequence is that of NADH-ubiquinone oxidoreductase chain 4L (MT-ND4L) from Callorhinus ursinus (Northern fur seal).